The chain runs to 107 residues: Nucleoid-associated protein Pnuc_0701 (107 aa).

It belongs to the YbaB/EbfC family. Homodimer.

The protein resides in the cytoplasm. Its subcellular location is the nucleoid. Its function is as follows. Binds to DNA and alters its conformation. May be involved in regulation of gene expression, nucleoid organization and DNA protection. This Polynucleobacter asymbioticus (strain DSM 18221 / CIP 109841 / QLW-P1DMWA-1) (Polynucleobacter necessarius subsp. asymbioticus) protein is Nucleoid-associated protein Pnuc_0701.